Here is a 166-residue protein sequence, read N- to C-terminus: 2-C-methyl-D-erythritol 2,4-cyclodiphosphate synthase (166 aa).

Asp-15 and His-17 together coordinate a divalent metal cation. 4-CDP-2-C-methyl-D-erythritol 2-phosphate is bound by residues 15-17 (DVH) and 43-44 (HS). A divalent metal cation is bound at residue His-51. 4-CDP-2-C-methyl-D-erythritol 2-phosphate-binding positions include 65 to 67 (DIG), 141 to 144 (TTNE), and Arg-151.

It belongs to the IspF family. In terms of assembly, homotrimer. The cofactor is a divalent metal cation.

It carries out the reaction 4-CDP-2-C-methyl-D-erythritol 2-phosphate = 2-C-methyl-D-erythritol 2,4-cyclic diphosphate + CMP. Its pathway is isoprenoid biosynthesis; isopentenyl diphosphate biosynthesis via DXP pathway; isopentenyl diphosphate from 1-deoxy-D-xylulose 5-phosphate: step 4/6. Involved in the biosynthesis of isopentenyl diphosphate (IPP) and dimethylallyl diphosphate (DMAPP), two major building blocks of isoprenoid compounds. Catalyzes the conversion of 4-diphosphocytidyl-2-C-methyl-D-erythritol 2-phosphate (CDP-ME2P) to 2-C-methyl-D-erythritol 2,4-cyclodiphosphate (ME-CPP) with a corresponding release of cytidine 5-monophosphate (CMP). The sequence is that of 2-C-methyl-D-erythritol 2,4-cyclodiphosphate synthase from Synechococcus sp. (strain CC9311).